The sequence spans 502 residues: ATP synthase subunit alpha (502 aa).

The disordered stretch occupies residues 115-135 (VDGLGPINTTNTRPIESPAPG). Residue 169–176 (GDRQTGKT) coordinates ATP.

It belongs to the ATPase alpha/beta chains family. As to quaternary structure, F-type ATPases have 2 components, CF(1) - the catalytic core - and CF(0) - the membrane proton channel. CF(1) has five subunits: alpha(3), beta(3), gamma(1), delta(1), epsilon(1). CF(0) has three main subunits: a(1), b(2) and c(9-12). The alpha and beta chains form an alternating ring which encloses part of the gamma chain. CF(1) is attached to CF(0) by a central stalk formed by the gamma and epsilon chains, while a peripheral stalk is formed by the delta and b chains.

The protein resides in the cell membrane. It carries out the reaction ATP + H2O + 4 H(+)(in) = ADP + phosphate + 5 H(+)(out). Functionally, produces ATP from ADP in the presence of a proton gradient across the membrane. The alpha chain is a regulatory subunit. The protein is ATP synthase subunit alpha of Bacillus cereus (strain B4264).